Consider the following 434-residue polypeptide: Glutamate-1-semialdehyde 2,1-aminomutase (434 aa).

K273 is modified (N6-(pyridoxal phosphate)lysine).

Belongs to the class-III pyridoxal-phosphate-dependent aminotransferase family. HemL subfamily. As to quaternary structure, homodimer. Pyridoxal 5'-phosphate serves as cofactor.

The protein resides in the cytoplasm. The enzyme catalyses (S)-4-amino-5-oxopentanoate = 5-aminolevulinate. Its pathway is porphyrin-containing compound metabolism; protoporphyrin-IX biosynthesis; 5-aminolevulinate from L-glutamyl-tRNA(Glu): step 2/2. The polypeptide is Glutamate-1-semialdehyde 2,1-aminomutase (Polynucleobacter asymbioticus (strain DSM 18221 / CIP 109841 / QLW-P1DMWA-1) (Polynucleobacter necessarius subsp. asymbioticus)).